A 987-amino-acid chain; its full sequence is Leucine--tRNA ligase (987 aa).

A 'HIGH' region motif is present at residues 69 to 80 (PYPSGKGLHVGH). Residues 760–764 (KMGKS) carry the 'KMSKS' region motif. Position 763 (K763) interacts with ATP.

The protein belongs to the class-I aminoacyl-tRNA synthetase family.

It localises to the cytoplasm. It carries out the reaction tRNA(Leu) + L-leucine + ATP = L-leucyl-tRNA(Leu) + AMP + diphosphate. This is Leucine--tRNA ligase from Bifidobacterium longum (strain DJO10A).